We begin with the raw amino-acid sequence, 432 residues long: uncharacterized protein (432 aa).

SIS domains are found at residues 105 to 244 and 277 to 422; these read WLTE…DLVS and CDKK…VDLP.

This is an uncharacterized protein from Saccharomyces cerevisiae (strain ATCC 204508 / S288c) (Baker's yeast).